We begin with the raw amino-acid sequence, 533 residues long: Solute carrier family 2, facilitated glucose transporter member 2 (533 aa).

Residues 1–17 (MDGKSKMQAEKHLTGTL) lie on the Cytoplasmic side of the membrane. A helical membrane pass occupies residues 18–38 (VLSVFTAVLGFFQYGYSLGVI). At 39–110 (NAPQKVIEAH…SPHILTMYWS (72 aa)) the chain is on the extracellular side. N64 and N69 each carry an N-linked (GlcNAc...) asparagine glycan. A helical transmembrane segment spans residues 111–131 (LSVSMFAVGGMVSSFTVGWIG). Residues 132–136 (DRLGR) lie on the Cytoplasmic side of the membrane. A helical membrane pass occupies residues 137 to 157 (VKAMLVVNVLSIAGNLLMGLA). The Extracellular segment spans residues 158 to 163 (KMGPSH). The helical transmembrane segment at 164–184 (ILIIAGRAITGLYCGLSSGLV) threads the bilayer. Residues 185-199 (PMYVSEVSPTALRGA) lie on the Cytoplasmic side of the membrane. Residues 200–220 (LGTLHQLAIVTGILISQVLGL) form a helical membrane-spanning segment. Q205 is a binding site for D-glucose. Residues 221 to 229 (DFLLGNDEL) lie on the Extracellular side of the membrane. A helical membrane pass occupies residues 230 to 250 (WPLLLGLSGVAALLQFFLLLL). Topologically, residues 251-315 (CPESPRYLYI…LFSSSKYRQA (65 aa)) are cytoplasmic. A helical transmembrane segment spans residues 316–336 (VIVALMVQISQQFSGINAIFY). D-glucose contacts are provided by residues 326 to 327 (QQ) and N332. The Extracellular portion of the chain corresponds to 337 to 350 (YSTNIFQRAGVGQP). The helical transmembrane segment at 351–371 (VYATIGVGVVNTVFTVISVFL) threads the bilayer. N361 provides a ligand contact to D-glucose. Residues 372-379 (VEKAGRRS) lie on the Cytoplasmic side of the membrane. A helical transmembrane segment spans residues 380 to 400 (LFLAGLMGMLISAVAMTVGLV). Topologically, residues 401 to 413 (LLSQFAWMSYVSM) are extracellular. The helical transmembrane segment at 414 to 434 (VAIFLFVIFFEVGPGPIPWFI) threads the bilayer. E424 and W432 together coordinate D-glucose. At 435–445 (VAELFSQGPRP) the chain is on the cytoplasmic side. A helical transmembrane segment spans residues 446–466 (AAIAVAGFCNWACNFIVGMCF). Residues 467–471 (QYIAD) lie on the Extracellular side of the membrane. The chain crosses the membrane as a helical span at residues 472-492 (LCGPYVFVVFAVLLLVFFLFA). Topologically, residues 493–533 (YLKVPETKGKSFEEIAAAFRRKKLPAKSMTELEDLRGGEEA) are cytoplasmic.

The protein belongs to the major facilitator superfamily. Sugar transporter (TC 2.A.1.1) family. Glucose transporter subfamily.

It is found in the cell membrane. It carries out the reaction D-glucose(out) = D-glucose(in). The catalysed reaction is D-fructose(out) = D-fructose(in). It catalyses the reaction L-dehydroascorbate(out) = L-dehydroascorbate(in). The enzyme catalyses D-galactose(in) = D-galactose(out). D-glucose and maltose competitively inhibit fructose transport. D-glucose, D-fructose and maltose inhibit deoxyglucose transport. Facilitative hexose transporter that mediates the transport of glucose, fructose and galactose. Likely mediates the bidirectional transfer of glucose across the plasma membrane of hepatocytes and is responsible for uptake of glucose by the beta cells. This chain is Solute carrier family 2, facilitated glucose transporter member 2, found in Gallus gallus (Chicken).